The sequence spans 457 residues: Multidrug resistance protein MdtK (457 aa).

12 consecutive transmembrane segments (helical) span residues 11 to 31 (LLAL…MGFV), 53 to 73 (IWLP…PVIA), 93 to 113 (WLAG…GYII), 127 to 147 (AVGY…FQVA), 160 to 180 (GMVM…IFIY), 188 to 208 (LGGI…FIAM), 243 to 263 (LPIA…ALLV), 276 to 296 (IALN…AAVT), 314 to 334 (AART…IFTV), 350 to 370 (VVAL…SDSI), 387 to 407 (IFFI…YILA), and 418 to 438 (PAGF…LMML).

The protein belongs to the multi antimicrobial extrusion (MATE) (TC 2.A.66.1) family. MdtK subfamily.

The protein resides in the cell inner membrane. Functionally, multidrug efflux pump that functions probably as a Na(+)/drug antiporter. This Salmonella agona (strain SL483) protein is Multidrug resistance protein MdtK.